Reading from the N-terminus, the 74-residue chain is Exodeoxyribonuclease 7 small subunit (74 aa).

The protein belongs to the XseB family. Heterooligomer composed of large and small subunits.

Its subcellular location is the cytoplasm. The enzyme catalyses Exonucleolytic cleavage in either 5'- to 3'- or 3'- to 5'-direction to yield nucleoside 5'-phosphates.. Its function is as follows. Bidirectionally degrades single-stranded DNA into large acid-insoluble oligonucleotides, which are then degraded further into small acid-soluble oligonucleotides. The polypeptide is Exodeoxyribonuclease 7 small subunit (Neisseria meningitidis serogroup A / serotype 4A (strain DSM 15465 / Z2491)).